Reading from the N-terminus, the 436-residue chain is 3-ketoacyl-CoA thiolase (436 aa).

The active-site Acyl-thioester intermediate is the cysteine 99. Catalysis depends on proton acceptor residues histidine 392 and cysteine 422.

The protein belongs to the thiolase-like superfamily. Thiolase family. In terms of assembly, heterotetramer of two alpha chains (FadJ) and two beta chains (FadI).

Its subcellular location is the cytoplasm. The enzyme catalyses an acyl-CoA + acetyl-CoA = a 3-oxoacyl-CoA + CoA. It functions in the pathway lipid metabolism; fatty acid beta-oxidation. In terms of biological role, catalyzes the final step of fatty acid oxidation in which acetyl-CoA is released and the CoA ester of a fatty acid two carbons shorter is formed. The protein is 3-ketoacyl-CoA thiolase of Yersinia enterocolitica serotype O:8 / biotype 1B (strain NCTC 13174 / 8081).